Reading from the N-terminus, the 212-residue chain is 3-isopropylmalate dehydratase small subunit (212 aa).

It belongs to the LeuD family. LeuD type 1 subfamily. As to quaternary structure, heterodimer of LeuC and LeuD.

It catalyses the reaction (2R,3S)-3-isopropylmalate = (2S)-2-isopropylmalate. It participates in amino-acid biosynthesis; L-leucine biosynthesis; L-leucine from 3-methyl-2-oxobutanoate: step 2/4. Its function is as follows. Catalyzes the isomerization between 2-isopropylmalate and 3-isopropylmalate, via the formation of 2-isopropylmaleate. The chain is 3-isopropylmalate dehydratase small subunit from Pseudomonas aeruginosa (strain UCBPP-PA14).